The sequence spans 111 residues: Cell cycle protein GpsB (111 aa).

Residues 34–72 (LDMIIKDYEVFHKELEQLQQQNARLKRELEEQKLAAAQA) adopt a coiled-coil conformation.

This sequence belongs to the GpsB family. As to quaternary structure, forms polymers through the coiled coil domains. Interacts with PBP1, MreC and EzrA.

It localises to the cytoplasm. In terms of biological role, divisome component that associates with the complex late in its assembly, after the Z-ring is formed, and is dependent on DivIC and PBP2B for its recruitment to the divisome. Together with EzrA, is a key component of the system that regulates PBP1 localization during cell cycle progression. Its main role could be the removal of PBP1 from the cell pole after pole maturation is completed. Also contributes to the recruitment of PBP1 to the division complex. Not essential for septum formation. This chain is Cell cycle protein GpsB, found in Bacillus cytotoxicus (strain DSM 22905 / CIP 110041 / 391-98 / NVH 391-98).